We begin with the raw amino-acid sequence, 378 residues long: P2X receptor A (378 aa).

Topologically, residues 1 to 27 (MGFSFDWDDIFQYSTVKIVRIRDRRLG) are cytoplasmic. A helical transmembrane segment spans residues 28 to 48 (ILHLSFLVGIVAYIVVYSAII). The Lumenal portion of the chain corresponds to 49–307 (KKGYLFTEVP…IQTGTIGSFH (259 aa)). The tract at residues 290 to 303 (RHGIRVIFIQTGTI) is pore-forming motif. The helical transmembrane segment at 308-328 (FQTLLLTLVSGLGLLAVATTV) threads the bilayer. At 329-378 (VDQLAIRLLPQRKSYSSLKFQVTESMSNPMKKRITTDEGEDVLYTRIEGL) the chain is on the cytoplasmic side.

This sequence belongs to the P2X receptor family.

Its subcellular location is the contractile vacuole membrane. Its function is as follows. P2X receptors are ATP-gated ion channels that play a role in intracellular calcium signaling. Not required for the purinergic response to extracellular nucleotides. Inward currents evoked by intracellular ATP and ATP analogs. Exclusively selective for ATP over other nucleotides. Insensitive to P2 receptor antagonists PPADS, suramin and 2',3'-O-(2,4,6-trinitrophenyl)-ATP but inhibited by nanomolar concentrations of copper and sodium ion. More permeable to ammonium than either sodium or potassium ions and less permeable to choline. It has been reported that p2xA is not essential for osmoregulation, however this information is in contradiction with another source which indicates that p2xA is required for osmoregulation. Found to be permeable to chloride ions. Inhibited by copper and sodium ions. This chain is P2X receptor A (p2xA), found in Dictyostelium discoideum (Social amoeba).